We begin with the raw amino-acid sequence, 276 residues long: Halorhodopsin (276 aa).

A propeptide spanning residues 1-21 (MTAASTTATTMLQATQSDVLQ) is cleaved from the precursor. Topologically, residues 22 to 25 (EIQS) are extracellular. A helical membrane pass occupies residues 26-51 (NFLLNSSIWVNIALAGVVILLFVAMG). Residues 52 to 57 (RDIESP) lie on the Cytoplasmic side of the membrane. A helical membrane pass occupies residues 58–81 (RAKLIWVATMLVPLVSISSYAGLA). Topologically, residues 82–105 (SGLTVGFLQMPPGHALAGQEVLSP) are extracellular. The chain crosses the membrane as a helical span at residues 106-127 (WGRYLTWTFSTPMILLALGLLA). At 128–130 (DTD) the chain is on the cytoplasmic side. The chain crosses the membrane as a helical span at residues 131–154 (IASLFTAITMDIGMCVTGLAAALI). Residues 155-157 (TSS) are Extracellular-facing. A helical transmembrane segment spans residues 158-180 (HLLRWVFYGISCAFFVAVLYVLL). Residues 181–192 (VQWPADAEAAGT) are Cytoplasmic-facing. Residues 193–216 (SEIFGTLKILTVVLWLGYPILWAL) form a helical membrane-spanning segment. Over 217–225 (GSEGVALLS) the chain is Extracellular. The chain crosses the membrane as a helical span at residues 226-254 (VGVTSWGYSGLDILAKYVFAFLLLRWVAA). Position 241 is an N6-(retinylidene)lysine (Lys-241). The Cytoplasmic segment spans residues 255 to 276 (NEGAVSGSGMSIGSGGAAPADD).

The protein belongs to the archaeal/bacterial/fungal opsin family.

It is found in the cell membrane. Functionally, light-driven chloride pump. This chain is Halorhodopsin (hop), found in Halobacterium halobium (strain port).